Consider the following 269-residue polypeptide: Tryptophan synthase alpha chain (269 aa).

Catalysis depends on proton acceptor residues E45 and D56.

This sequence belongs to the TrpA family. As to quaternary structure, tetramer of two alpha and two beta chains.

It carries out the reaction (1S,2R)-1-C-(indol-3-yl)glycerol 3-phosphate + L-serine = D-glyceraldehyde 3-phosphate + L-tryptophan + H2O. It participates in amino-acid biosynthesis; L-tryptophan biosynthesis; L-tryptophan from chorismate: step 5/5. Functionally, the alpha subunit is responsible for the aldol cleavage of indoleglycerol phosphate to indole and glyceraldehyde 3-phosphate. This Shouchella clausii (strain KSM-K16) (Alkalihalobacillus clausii) protein is Tryptophan synthase alpha chain.